The following is an 872-amino-acid chain: Leucine--tRNA ligase (872 aa).

The short motif at 42 to 52 (PYPSGNLHMGH) is the 'HIGH' region element. Residues 631 to 635 (KMSKS) carry the 'KMSKS' region motif. K634 provides a ligand contact to ATP.

Belongs to the class-I aminoacyl-tRNA synthetase family.

The protein localises to the cytoplasm. It catalyses the reaction tRNA(Leu) + L-leucine + ATP = L-leucyl-tRNA(Leu) + AMP + diphosphate. In Blochmanniella pennsylvanica (strain BPEN), this protein is Leucine--tRNA ligase.